The sequence spans 629 residues: Phosphomethylpyrimidine synthase (629 aa).

The interval 1–30 is disordered; that stretch reads MTTKLKNASNLSESAQVDQQSVQPFTRSQK. Substrate contacts are provided by residues N233, M262, Y291, H327, 347 to 349, 388 to 391, and E427; these read SRG and DGLR. Residue H431 coordinates Zn(2+). Y454 contributes to the substrate binding site. Position 495 (H495) interacts with Zn(2+). The [4Fe-4S] cluster site is built by C575, C578, and C583.

This sequence belongs to the ThiC family. As to quaternary structure, homodimer. The cofactor is [4Fe-4S] cluster.

The catalysed reaction is 5-amino-1-(5-phospho-beta-D-ribosyl)imidazole + S-adenosyl-L-methionine = 4-amino-2-methyl-5-(phosphooxymethyl)pyrimidine + CO + 5'-deoxyadenosine + formate + L-methionine + 3 H(+). Its pathway is cofactor biosynthesis; thiamine diphosphate biosynthesis. Its function is as follows. Catalyzes the synthesis of the hydroxymethylpyrimidine phosphate (HMP-P) moiety of thiamine from aminoimidazole ribotide (AIR) in a radical S-adenosyl-L-methionine (SAM)-dependent reaction. This is Phosphomethylpyrimidine synthase from Pseudomonas fluorescens (strain ATCC BAA-477 / NRRL B-23932 / Pf-5).